A 304-amino-acid chain; its full sequence is Tritrans,polycis-undecaprenyl-diphosphate synthase (geranylgeranyl-diphosphate specific) (304 aa).

The active site involves Asp-33. Asp-33 lines the Mg(2+) pocket. Substrate contacts are provided by residues 34 to 37 (GNRR), Lys-46, His-50, and 78 to 80 (STE). Asn-81 acts as the Proton acceptor in catalysis. Residues Phe-82, Arg-84, Arg-203, and 209-211 (RTS) contribute to the substrate site.

This sequence belongs to the UPP synthase family. As to quaternary structure, homodimer. Mg(2+) is required as a cofactor.

The enzyme catalyses geranylgeranyl diphosphate + 7 isopentenyl diphosphate = tri-trans,hepta-cis-undecaprenyl diphosphate + 7 diphosphate. In terms of biological role, catalyzes the sequential condensation of isopentenyl diphosphate (IPP) with geranylgeranyl diphosphate (GGPP) to yield (2Z,6Z,10Z,14Z,18Z,22Z,26Z,30E,34E,38E)-undecaprenyl diphosphate (tritrans,heptacis-UPP). It is probably the precursor of glycosyl carrier lipids. This Haloarcula marismortui (strain ATCC 43049 / DSM 3752 / JCM 8966 / VKM B-1809) (Halobacterium marismortui) protein is Tritrans,polycis-undecaprenyl-diphosphate synthase (geranylgeranyl-diphosphate specific).